The sequence spans 89 residues: Nucleoside triphosphatase I (89 aa).

Residues 42–89 (FLGLDKMHSLLLFHDTGVGKTITTTFIIKQLKNIYTNWSILLLVKKHL) form the Helicase ATP-binding domain. 55–62 (HDTGVGKT) lines the ATP pocket.

Belongs to the helicase family. NPH I subfamily.

It catalyses the reaction a ribonucleoside 5'-triphosphate + H2O = a ribonucleoside 5'-diphosphate + phosphate + H(+). In terms of biological role, serves two roles in transcription; it acts in concert with viral termination factor/capping enzyme to catalyze release of UUUUUNU-containing nascent RNA from the elongation complex, and it acts by itself as a polymerase elongation factor to facilitate readthrough of intrinsic pause sites. This chain is Nucleoside triphosphatase I (NPH1), found in Swinepox virus (strain Kasza) (SWPV).